Reading from the N-terminus, the 336-residue chain is Fructose-1,6-bisphosphatase class 1 (336 aa).

The Mg(2+) site is built by glutamate 92, aspartate 115, leucine 117, and aspartate 118. Substrate-binding positions include aspartate 118–serine 121, asparagine 211, tyrosine 244, tyrosine 262–tyrosine 264, and lysine 274. Glutamate 280 lines the Mg(2+) pocket.

It belongs to the FBPase class 1 family. As to quaternary structure, homotetramer. Mg(2+) serves as cofactor.

Its subcellular location is the cytoplasm. The catalysed reaction is beta-D-fructose 1,6-bisphosphate + H2O = beta-D-fructose 6-phosphate + phosphate. It functions in the pathway carbohydrate biosynthesis; gluconeogenesis. This is Fructose-1,6-bisphosphatase class 1 from Vibrio atlanticus (strain LGP32) (Vibrio splendidus (strain Mel32)).